A 144-amino-acid polypeptide reads, in one-letter code: Actin-associated protein FAM107A (144 aa).

Residues 70-90 (VLEHRRRNQLIKKKEEELEAK) adopt a coiled-coil conformation. Positions 74–84 (RRRNQLIKKKE) match the Nuclear localization signal motif. The disordered stretch occupies residues 104-123 (QQRLNQLENPPQRDEDHAPE). The segment covering 114 to 123 (PQRDEDHAPE) has biased composition (basic and acidic residues).

In terms of assembly, interacts with ACTB. Interacts with F-actin. Interacts with PRDX1. Interacts with COMMD1; this interaction stabilizes COMMD1 in the nucleus. Interacts with MAP1A. In terms of tissue distribution, expressed in septum, the neocortex, the CA3 region of the hippocampus and the cerebellum (at protein level).

Its subcellular location is the nucleus. It is found in the cytoplasm. The protein resides in the cytoskeleton. The protein localises to the stress fiber. It localises to the cell junction. Its subcellular location is the focal adhesion. It is found in the cell projection. The protein resides in the ruffle membrane. The protein localises to the synapse. Its function is as follows. Stress-inducible actin-binding protein that plays a role in synaptic and cognitive functions by modulating actin filamentous (F-actin) dynamics. Mediates polymerization of globular actin to F-actin. Also binds to, stabilizes and bundles F-actin. Involved in synaptic function by regulating neurite outgrowth in an actin-dependent manner and for the acquisition of hippocampus-dependent cognitive function, such as learning and long-term memory. Plays a role in the actin and microtubule cytoskeleton organization; negatively regulates focal adhesion (FA) assembly promoting malignant glial cell migration in an actin-, microtubule- and MAP1A-dependent manner. Also involved in neuroblastoma G1/S phase cell cycle progression and cell proliferation inhibition by stimulating ubiquitination of NF-kappa-B subunit RELA and NF-kappa-B degradation in a COMMD1- and actin-dependent manner. May play a role in tumor development. The protein is Actin-associated protein FAM107A of Mus musculus (Mouse).